The primary structure comprises 226 residues: Potassium/proton antiporter CemA (226 aa).

The next 3 membrane-spanning stretches (helical) occupy residues phenylalanine 7–phenylalanine 27, isoleucine 111–leucine 131, and isoleucine 186–isoleucine 206.

This sequence belongs to the CemA family.

It localises to the plastid. Its subcellular location is the chloroplast inner membrane. The enzyme catalyses K(+)(in) + H(+)(out) = K(+)(out) + H(+)(in). Its function is as follows. Contributes to K(+)/H(+) antiport activity by supporting proton efflux to control proton extrusion and homeostasis in chloroplasts in a light-dependent manner to modulate photosynthesis. Prevents excessive induction of non-photochemical quenching (NPQ) under continuous-light conditions. Indirectly promotes efficient inorganic carbon uptake into chloroplasts. This is Potassium/proton antiporter CemA from Buxus microphylla (Littleleaf boxwood).